The following is a 207-amino-acid chain: Large ribosomal subunit protein uL4 (207 aa).

Residues 48–75 form a disordered region; it reads THSVKNRSAVRGGGRKPWRQKGTGRARQ. Over residues 60–71 the composition is skewed to basic residues; it reads GGRKPWRQKGTG.

Belongs to the universal ribosomal protein uL4 family. Part of the 50S ribosomal subunit.

In terms of biological role, one of the primary rRNA binding proteins, this protein initially binds near the 5'-end of the 23S rRNA. It is important during the early stages of 50S assembly. It makes multiple contacts with different domains of the 23S rRNA in the assembled 50S subunit and ribosome. Functionally, forms part of the polypeptide exit tunnel. This is Large ribosomal subunit protein uL4 from Staphylococcus carnosus (strain TM300).